Consider the following 537-residue polypeptide: ATP synthase subunit beta 1 (537 aa).

164 to 171 (GGAGVGKT) is an ATP binding site. Positions 471–537 (PKQSATEKNS…ESLEEPQNGR (67 aa)) are disordered. Composition is skewed to polar residues over residues 473–498 (QSATEKNSSMNSDLKPSNSESNSPGP) and 507–528 (IPSSAKPNVSQPNTFKQDAQNE).

Belongs to the ATPase alpha/beta chains family. As to quaternary structure, F-type ATPases have 2 components, CF(1) - the catalytic core - and CF(0) - the membrane proton channel. CF(1) has five subunits: alpha(3), beta(3), gamma(1), delta(1), epsilon(1). CF(0) has three main subunits: a(1), b(2) and c(9-12). The alpha and beta chains form an alternating ring which encloses part of the gamma chain. CF(1) is attached to CF(0) by a central stalk formed by the gamma and epsilon chains, while a peripheral stalk is formed by the delta and b chains.

Its subcellular location is the cell inner membrane. It catalyses the reaction ATP + H2O + 4 H(+)(in) = ADP + phosphate + 5 H(+)(out). In terms of biological role, produces ATP from ADP in the presence of a proton gradient across the membrane. The catalytic sites are hosted primarily by the beta subunits. The polypeptide is ATP synthase subunit beta 1 (Pseudoalteromonas atlantica (strain T6c / ATCC BAA-1087)).